The following is a 555-amino-acid chain: Solute carrier family 2, facilitated glucose transporter member 10 (555 aa).

Residues methionine 1 to serine 15 are Cytoplasmic-facing. Residues leucine 16–leucine 36 traverse the membrane as a helical segment. Residues lysine 37–glutamate 48 are Extracellular-facing. The chain crosses the membrane as a helical span at residues alanine 49 to isoleucine 69. At aspartate 70 to asparagine 82 the chain is on the cytoplasmic side. A helical membrane pass occupies residues leucine 83–valine 103. Topologically, residues glycine 104–arginine 105 are extracellular. Residues valine 106–isoleucine 126 traverse the membrane as a helical segment. The Cytoplasmic segment spans residues valine 127–arginine 132. A helical membrane pass occupies residues glycine 133 to methionine 153. Topologically, residues asparagine 154 to lysine 165 are extracellular. Asparagine 161 carries an N-linked (GlcNAc...) asparagine glycan. A helical transmembrane segment spans residues tyrosine 166–proline 186. The Cytoplasmic portion of the chain corresponds to serine 187–threonine 240. Residues leucine 241–tyrosine 261 traverse the membrane as a helical segment. D-glucose is bound at residue glutamine 250–glutamine 251. Residues alanine 262 to alanine 277 lie on the Extracellular side of the membrane. Residue asparagine 274 is glycosylated (N-linked (GlcNAc...) asparagine). A helical membrane pass occupies residues valine 278–phenylalanine 298. Topologically, residues alanine 299–arginine 305 are cytoplasmic. Residues isoleucine 306–serine 326 traverse the membrane as a helical segment. Residues phenylalanine 327–threonine 415 are Extracellular-facing. N-linked (GlcNAc...) asparagine glycosylation is found at asparagine 344, asparagine 351, asparagine 400, and asparagine 413. A helical transmembrane segment spans residues isoleucine 416–phenylalanine 436. Topologically, residues glycine 437–asparagine 464 are cytoplasmic. Residue tryptophan 441 participates in D-glucose binding. The helical transmembrane segment at tryptophan 465–glycine 483 threads the bilayer. Residues leucine 484–serine 485 are Extracellular-facing. Residues tryptophan 486–isoleucine 506 form a helical membrane-spanning segment. Residues proline 507–serine 555 lie on the Cytoplasmic side of the membrane. The interval glutamine 528–serine 555 is disordered.

It belongs to the major facilitator superfamily. Sugar transporter (TC 2.A.1.1) family. Glucose transporter subfamily.

Its subcellular location is the endomembrane system. The protein localises to the cytoplasm. It localises to the perinuclear region. The enzyme catalyses D-glucose(out) = D-glucose(in). Facilitative glucose transporter required for the development of the cardiovascular system. The polypeptide is Solute carrier family 2, facilitated glucose transporter member 10 (Xenopus tropicalis (Western clawed frog)).